A 1117-amino-acid chain; its full sequence is PR domain zinc finger protein 10 (1117 aa).

Positions 97–142 (QQTPLGGLEAKEEEDEDEDEDTEEDEEEDGEDADLDDWEPDPPRPF) are disordered. A compositionally biased stretch (acidic residues) spans 107 to 136 (KEEEDEDEDEDTEEDEEEDGEDADLDDWEP). Residues 182-300 (LPLVLYIDRF…PKQELKVWYA (119 aa)) enclose the SET domain. Residues 201–305 (IPKRTQLGPV…KVWYAASYAE (105 aa)) are N-terminal PR domain; essential for transcriptional activator activity. Residues 329–351 (WPCYECNRRFISSEQLQQHLNSH) form a C2H2-type 1 zinc finger. Residue K354 forms a Glycyl lysine isopeptide (Lys-Gly) (interchain with G-Cter in SUMO2) linkage. Residues 361 to 381 (TRGRGRGRGKRRFGPGRRPGR) are compositionally biased toward basic residues. Positions 361-386 (TRGRGRGRGKRRFGPGRRPGRPPKFI) are disordered. S398 is modified (phosphoserine). T402 is subject to Phosphothreonine. The segment at 440 to 474 (QETQSSLEHEPETHTLHLQPQHEESVVPTQSTLTA) is disordered. The span at 446–464 (LEHEPETHTLHLQPQHEES) shows a compositional bias: basic and acidic residues. 9 consecutive C2H2-type zinc fingers follow at residues 500–522 (FKCLQCGKAFREKDKLDQHLRFH), 530–552 (LTCDLCNKGFISSASLESHMKLH), 558–580 (YSCIFCPESFDRLDLLKDHVAIH), 586–609 (FTCPTCKKRFPDFIQVKKHVRSFH), 614–636 (YQCTECDKAFCRPDKLRLHMLRH), 642–665 (FLCSTCGKQFKRKDKLREHMQRMH), 697–720 (FKCRLCMMGFRRRGMLVNHLSKRH), 742–765 (YFCQYCDKVYKSASKRKAHILKNH), and 804–827 (VCCPHCSKQYSSKTKMVQHIRKKH). Residues 871–1097 (QAMTELSQTL…QTTSQQQTTQ (227 aa)) are C-terminal glutamine-rich region; essential for transcriptional activator activity. Disordered regions lie at residues 919–943 (VAPATSPHQSQQSTVDVGQLHDPQP), 958–1001 (GQPL…SSVQ), and 1066–1094 (QTSALSGGVQVQPPAHSDSLDPQTTSQQQ). Positions 924–934 (SPHQSQQSTVD) are enriched in polar residues.

The protein belongs to the class V-like SAM-binding methyltransferase superfamily.

Its subcellular location is the nucleus. Its function is as follows. Transcriptional activator, essential for early embryonic development and survival of embryonic stem cells (ESCs). Supports cell growth and survival during early development by transcriptionally activating the expression of the translation initiation factor EIF3B, to sustain global translation. Activates the transcription of FLNC. The chain is PR domain zinc finger protein 10 (PRDM10) from Pongo abelii (Sumatran orangutan).